The primary structure comprises 207 residues: MYSAPSACTCLCLHFLLLCFQVQVLAAEENVDFRIHVENQTRARDDVSRKQLRLYQLYSRTSGKHIQVLGRRISARGEDGDKYAQLLVETDTFGSQVRIKGKETEFYLCMNRKGKLVGKPDGTSKECVFIEKVLENNYTALMSAKYSGWYVGFTKKGRPRKGPKTRENQQDVHFMKRYPKGQAELQKPFKYTTVTKRSRRIRPTHPG.

The signal sequence occupies residues 1-27 (MYSAPSACTCLCLHFLLLCFQVQVLAA). A glycan (N-linked (GlcNAc...) asparagine) is linked at Asn-39. Cys-109 and Cys-127 are oxidised to a cystine. A glycan (N-linked (GlcNAc...) asparagine) is linked at Asn-137.

This sequence belongs to the heparin-binding growth factors family. In terms of assembly, interacts with FGFR3 and FGFR4.

The protein localises to the secreted. Functionally, plays an important role in the regulation of cell proliferation, cell differentiation and cell migration. Required for normal ossification and bone development. Stimulates hepatic and intestinal proliferation. The sequence is that of Fibroblast growth factor 18 (Fgf18) from Mus musculus (Mouse).